Here is a 222-residue protein sequence, read N- to C-terminus: MNEELSAFFDVPVGTMMLAIAFPAILLPTPNRLITNRWITIQQWLVKLIMKQLLSIHNTKGLSWSLMLITLTLFIGLTNLLGLLPYSFAPTAQLTVNLSMAIPLWTGTVILGFRYKTKISLAHLLPQGTPTFLIPMIIIIETISLLIRPVTLAVRLTANITAGHLLIHLTGTAALTLLSIHSMTITVTFITVVVLTILELAVALIQAYVFALLISLYLHESA.

Transmembrane regions (helical) follow at residues 7 to 27 (AFFD…AILL), 64 to 84 (WSLM…LGLL), 93 to 113 (QLTV…ILGF), 132 to 152 (FLIP…PVTL), 160 to 180 (ITAG…LLSI), and 185 to 205 (ITVT…VALI).

This sequence belongs to the ATPase A chain family. As to quaternary structure, component of the ATP synthase complex composed at least of ATP5F1A/subunit alpha, ATP5F1B/subunit beta, ATP5MC1/subunit c (homooctomer), MT-ATP6/subunit a, MT-ATP8/subunit 8, ATP5ME/subunit e, ATP5MF/subunit f, ATP5MG/subunit g, ATP5MK/subunit k, ATP5MJ/subunit j, ATP5F1C/subunit gamma, ATP5F1D/subunit delta, ATP5F1E/subunit epsilon, ATP5PF/subunit F6, ATP5PB/subunit b, ATP5PD/subunit d, ATP5PO/subunit OSCP. ATP synthase complex consists of a soluble F(1) head domain (subunits alpha(3) and beta(3)) - the catalytic core - and a membrane F(0) domain - the membrane proton channel (subunits c, a, 8, e, f, g, k and j). These two domains are linked by a central stalk (subunits gamma, delta, and epsilon) rotating inside the F1 region and a stationary peripheral stalk (subunits F6, b, d, and OSCP). Interacts with DNAJC30; interaction is direct.

It is found in the mitochondrion inner membrane. The catalysed reaction is H(+)(in) = H(+)(out). In terms of biological role, subunit a, of the mitochondrial membrane ATP synthase complex (F(1)F(0) ATP synthase or Complex V) that produces ATP from ADP in the presence of a proton gradient across the membrane which is generated by electron transport complexes of the respiratory chain. ATP synthase complex consist of a soluble F(1) head domain - the catalytic core - and a membrane F(1) domain - the membrane proton channel. These two domains are linked by a central stalk rotating inside the F(1) region and a stationary peripheral stalk. During catalysis, ATP synthesis in the catalytic domain of F(1) is coupled via a rotary mechanism of the central stalk subunits to proton translocation. With the subunit c (ATP5MC1), forms the proton-conducting channel in the F(0) domain, that contains two crucial half-channels (inlet and outlet) that facilitate proton movement from the mitochondrial intermembrane space (IMS) into the matrix. Protons are taken up via the inlet half-channel and released through the outlet half-channel, following a Grotthuss mechanism. This Mammuthus primigenius (Siberian woolly mammoth) protein is ATP synthase F(0) complex subunit a.